The following is a 151-amino-acid chain: Small heat shock protein HspH (151 aa).

Positions 28-138 (RAGEDNYPPY…KPRRIAINAA (111 aa)) constitute a sHSP domain.

Belongs to the small heat shock protein (HSP20) family.

The chain is Small heat shock protein HspH (hspH) from Bradyrhizobium diazoefficiens (strain JCM 10833 / BCRC 13528 / IAM 13628 / NBRC 14792 / USDA 110).